Consider the following 593-residue polypeptide: Proteasome-associated ATPase (593 aa).

The stretch at 5 to 94 forms a coiled coil; that stretch reads DDADSRAARW…KEEIDRLAQP (90 aa). ATP is bound at residue 281-286; it reads GCGKTL. A disordered region spans residues 574–593; sequence GKGADAGRSIETASNTGQYL. A compositionally biased stretch (polar residues) spans 584 to 593; the sequence is ETASNTGQYL. The docks into pockets in the proteasome alpha-ring stretch occupies residues 592-593; that stretch reads YL.

The protein belongs to the AAA ATPase family. In terms of assembly, homohexamer. Assembles into a hexameric ring structure that caps the 20S proteasome core. Strongly interacts with the prokaryotic ubiquitin-like protein Pup through a hydrophobic interface; the interacting region of ARC lies in its N-terminal coiled-coil domain. There is one Pup binding site per ARC hexamer ring. Upon ATP-binding, the C-terminus of ARC interacts with the alpha-rings of the proteasome core, possibly by binding to the intersubunit pockets.

It participates in protein degradation; proteasomal Pup-dependent pathway. Functionally, ATPase which is responsible for recognizing, binding, unfolding and translocation of pupylated proteins into the bacterial 20S proteasome core particle. May be essential for opening the gate of the 20S proteasome via an interaction with its C-terminus, thereby allowing substrate entry and access to the site of proteolysis. Thus, the C-termini of the proteasomal ATPase may function like a 'key in a lock' to induce gate opening and therefore regulate proteolysis. The chain is Proteasome-associated ATPase from Salinispora arenicola (strain CNS-205).